A 192-amino-acid polypeptide reads, in one-letter code: Spermatogenesis-associated protein 3 (192 aa).

Basic residues predominate over residues Met1 to Arg15. Disordered stretches follow at residues Met1–Arg65 and Ser161–Gly184. Positions Ser19 to Ser59 are enriched in low complexity.

The protein resides in the cell projection. Its subcellular location is the cilium. It localises to the flagellum. The sequence is that of Spermatogenesis-associated protein 3 (SPATA3) from Homo sapiens (Human).